Reading from the N-terminus, the 299-residue chain is N-carbamoylputrescine amidase (299 aa).

One can recognise a CN hydrolase domain in the interval 10-268 (VVVSSLQFAC…EAVLVAQFDL (259 aa)). The Proton acceptor role is filled by E49. K122 serves as the catalytic Proton donor. The active-site Nucleophile is C159.

The protein belongs to the carbon-nitrogen hydrolase superfamily. In terms of assembly, homooctamer (isoform 2). As to expression, expressed in roots, stems, leaves and flowers.

It catalyses the reaction N-carbamoylputrescine + H2O + 2 H(+) = putrescine + NH4(+) + CO2. It participates in amine and polyamine biosynthesis; putrescine biosynthesis via agmatine pathway; putrescine from N-carbamoylputrescine (amidase route): step 1/1. Functionally, involved in polyamine biosynthesis. Catalyzes the hydrolysis of N-carbamoylputrescine to produce putrescine and ammonia. This Arabidopsis thaliana (Mouse-ear cress) protein is N-carbamoylputrescine amidase.